A 308-amino-acid polypeptide reads, in one-letter code: Ribosomal protein uL3 glutamine methyltransferase (308 aa).

It belongs to the protein N5-glutamine methyltransferase family. PrmB subfamily.

It catalyses the reaction L-glutaminyl-[ribosomal protein uL3] + S-adenosyl-L-methionine = N(5)-methyl-L-glutaminyl-[ribosomal protein uL3] + S-adenosyl-L-homocysteine + H(+). In terms of biological role, methylates large ribosomal subunit protein uL3 on a specific glutamine residue. In Xanthomonas campestris pv. campestris (strain ATCC 33913 / DSM 3586 / NCPPB 528 / LMG 568 / P 25), this protein is Ribosomal protein uL3 glutamine methyltransferase.